Here is a 552-residue protein sequence, read N- to C-terminus: Membrane protein insertase YidC (552 aa).

Helical transmembrane passes span 7–24, 364–384, 434–454, 473–493, and 508–528; these read VLWVIFFMSAVMLYDNWQ, WGWAIVLLTVLIKAVFFPLSA, LPVVIQIPVFISLYWVLLASV, PFFILPVLMAVSMFVQTSLNP, and PIAFSVMFFFFPAGLVLYYVV.

The protein belongs to the OXA1/ALB3/YidC family. Type 1 subfamily. Interacts with the Sec translocase complex via SecD. Specifically interacts with transmembrane segments of nascent integral membrane proteins during membrane integration.

It localises to the cell inner membrane. In terms of biological role, required for the insertion and/or proper folding and/or complex formation of integral membrane proteins into the membrane. Involved in integration of membrane proteins that insert both dependently and independently of the Sec translocase complex, as well as at least some lipoproteins. Aids folding of multispanning membrane proteins. The polypeptide is Membrane protein insertase YidC (Burkholderia cenocepacia (strain ATCC BAA-245 / DSM 16553 / LMG 16656 / NCTC 13227 / J2315 / CF5610) (Burkholderia cepacia (strain J2315))).